Here is a 67-residue protein sequence, read N- to C-terminus: MRMFRITACVPSQTRIRTQRELQNTYFTKLVPYDNSFREQQRIMKMGGKIVKVELATGRPGTNAGLA.

Positions 1-56 (MRMFRITACVPSQTRIRTQRELQNTYFTKLVPYDNSFREQQRIMKMGGKIVKVELA) constitute a CpcD-like domain.

It belongs to the phycobilisome linker protein family.

It localises to the cellular thylakoid membrane. Its function is as follows. Rod linker protein, associated with allophycocyanin. Linker polypeptides determine the state of aggregation and the location of the disk-shaped phycobiliprotein units within the phycobilisome and modulate their spectroscopic properties in order to mediate a directed and optimal energy transfer. This chain is Phycobilisome 7.8 kDa linker polypeptide, allophycocyanin-associated, core (apcC), found in Synechocystis sp. (strain ATCC 27184 / PCC 6803 / Kazusa).